A 260-amino-acid polypeptide reads, in one-letter code: Hydroxyethylthiazole kinase 2 (260 aa).

Substrate is bound at residue Met40. ATP-binding residues include Arg116 and Thr161. Residue Ala188 participates in substrate binding.

The protein belongs to the Thz kinase family. Mg(2+) is required as a cofactor.

The catalysed reaction is 5-(2-hydroxyethyl)-4-methylthiazole + ATP = 4-methyl-5-(2-phosphooxyethyl)-thiazole + ADP + H(+). It participates in cofactor biosynthesis; thiamine diphosphate biosynthesis; 4-methyl-5-(2-phosphoethyl)-thiazole from 5-(2-hydroxyethyl)-4-methylthiazole: step 1/1. Its function is as follows. Catalyzes the phosphorylation of the hydroxyl group of 4-methyl-5-beta-hydroxyethylthiazole (THZ). This is Hydroxyethylthiazole kinase 2 from Oceanobacillus iheyensis (strain DSM 14371 / CIP 107618 / JCM 11309 / KCTC 3954 / HTE831).